Consider the following 572-residue polypeptide: Proline--tRNA ligase (572 aa).

This sequence belongs to the class-II aminoacyl-tRNA synthetase family. ProS type 1 subfamily. In terms of assembly, homodimer.

The protein localises to the cytoplasm. The catalysed reaction is tRNA(Pro) + L-proline + ATP = L-prolyl-tRNA(Pro) + AMP + diphosphate. Functionally, catalyzes the attachment of proline to tRNA(Pro) in a two-step reaction: proline is first activated by ATP to form Pro-AMP and then transferred to the acceptor end of tRNA(Pro). As ProRS can inadvertently accommodate and process non-cognate amino acids such as alanine and cysteine, to avoid such errors it has two additional distinct editing activities against alanine. One activity is designated as 'pretransfer' editing and involves the tRNA(Pro)-independent hydrolysis of activated Ala-AMP. The other activity is designated 'posttransfer' editing and involves deacylation of mischarged Ala-tRNA(Pro). The misacylated Cys-tRNA(Pro) is not edited by ProRS. The chain is Proline--tRNA ligase from Yersinia pestis bv. Antiqua (strain Antiqua).